Here is a 269-residue protein sequence, read N- to C-terminus: Formamidopyrimidine-DNA glycosylase (269 aa).

Proline 2 acts as the Schiff-base intermediate with DNA in catalysis. The Proton donor role is filled by glutamate 3. Lysine 57 functions as the Proton donor; for beta-elimination activity in the catalytic mechanism. 3 residues coordinate DNA: histidine 90, arginine 109, and arginine 150. The FPG-type zinc-finger motif lies at 235–269 (QVYGRAGEACLTCGTTIKRSKHGQRTTFYCPHCQR). Catalysis depends on arginine 259, which acts as the Proton donor; for delta-elimination activity.

It belongs to the FPG family. Monomer. Zn(2+) serves as cofactor.

It catalyses the reaction Hydrolysis of DNA containing ring-opened 7-methylguanine residues, releasing 2,6-diamino-4-hydroxy-5-(N-methyl)formamidopyrimidine.. The enzyme catalyses 2'-deoxyribonucleotide-(2'-deoxyribose 5'-phosphate)-2'-deoxyribonucleotide-DNA = a 3'-end 2'-deoxyribonucleotide-(2,3-dehydro-2,3-deoxyribose 5'-phosphate)-DNA + a 5'-end 5'-phospho-2'-deoxyribonucleoside-DNA + H(+). Its function is as follows. Involved in base excision repair of DNA damaged by oxidation or by mutagenic agents. Acts as a DNA glycosylase that recognizes and removes damaged bases. Has a preference for oxidized purines, such as 7,8-dihydro-8-oxoguanine (8-oxoG). Has AP (apurinic/apyrimidinic) lyase activity and introduces nicks in the DNA strand. Cleaves the DNA backbone by beta-delta elimination to generate a single-strand break at the site of the removed base with both 3'- and 5'-phosphates. The polypeptide is Formamidopyrimidine-DNA glycosylase (Edwardsiella ictaluri (strain 93-146)).